The following is a 370-amino-acid chain: Probable phosphoserine aminotransferase (370 aa).

Arg-45 provides a ligand contact to L-glutamate. Pyridoxal 5'-phosphate-binding positions include 79-80, Trp-105, Thr-154, Asp-175, and Gln-198; that span reads GT. Lys-199 is modified (N6-(pyridoxal phosphate)lysine). 240-241 serves as a coordination point for pyridoxal 5'-phosphate; sequence NT.

It belongs to the class-V pyridoxal-phosphate-dependent aminotransferase family. SerC subfamily. Homodimer. Pyridoxal 5'-phosphate serves as cofactor.

The enzyme catalyses O-phospho-L-serine + 2-oxoglutarate = 3-phosphooxypyruvate + L-glutamate. It carries out the reaction 4-(phosphooxy)-L-threonine + 2-oxoglutarate = (R)-3-hydroxy-2-oxo-4-phosphooxybutanoate + L-glutamate. Its pathway is amino-acid biosynthesis; L-serine biosynthesis; L-serine from 3-phospho-D-glycerate: step 2/3. It functions in the pathway cofactor biosynthesis; pyridoxine 5'-phosphate biosynthesis; pyridoxine 5'-phosphate from D-erythrose 4-phosphate: step 3/5. Catalyzes the reversible conversion of 3-phosphohydroxypyruvate to phosphoserine and of 3-hydroxy-2-oxo-4-phosphonooxybutanoate to phosphohydroxythreonine. The polypeptide is Probable phosphoserine aminotransferase (Caenorhabditis elegans).